A 140-amino-acid chain; its full sequence is HTH-type transcriptional regulator LysM (140 aa).

An HTH asnC-type domain is found at 4 to 67 (VDESDLKILE…ELENEIRAIV (64 aa)). The H-T-H motif DNA-binding region spans 23–42 (YTSIAKELKISEAAVRKRIE).

As to quaternary structure, homotetramer.

It is found in the cytoplasm. The protein operates within amino-acid biosynthesis; L-lysine biosynthesis via AAA pathway [regulation]. In terms of biological role, in the absence or at low concentrations of lysine, activates the biosynthesis of this amino acid via the alpha-aminoadipate (AAA) pathway. The polypeptide is HTH-type transcriptional regulator LysM (lysM) (Sulfurisphaera tokodaii (strain DSM 16993 / JCM 10545 / NBRC 100140 / 7) (Sulfolobus tokodaii)).